The primary structure comprises 176 residues: Ribosome rescue factor SmrB (176 aa).

The region spanning 98–173 (LDLHGLTQKQ…GTAALLLLIE (76 aa)) is the Smr domain.

It belongs to the SmrB family. In terms of assembly, associates with collided ribosomes, but not with correctly translating polysomes.

In terms of biological role, acts as a ribosome collision sensor. Detects stalled/collided disomes (pairs of ribosomes where the leading ribosome is stalled and a second ribosome has collided with it) and endonucleolytically cleaves mRNA at the 5' boundary of the stalled ribosome. Stalled/collided disomes form a new interface (primarily via the 30S subunits) that binds SmrB. Cleaved mRNA becomes available for tmRNA ligation, leading to ribosomal subunit dissociation and rescue of stalled ribosomes. The protein is Ribosome rescue factor SmrB of Yersinia pseudotuberculosis serotype O:1b (strain IP 31758).